The following is a 344-amino-acid chain: Protein PopA1 (344 aa).

Disordered stretches follow at residues 1–28 (MSVG…NSQQ), 58–108 (SAGG…DANN), 134–156 (QPGG…AGGQ), 211–242 (GNGV…EDQG), and 268–311 (GGGN…NLQS). Composition is skewed to low complexity over residues 8–28 (SPSN…NSQQ) and 65–83 (NTGN…ANDP). Over residues 89 to 108 (SKSQGPQSANKTGNVDDANN) the composition is skewed to polar residues. Positions 138-156 (NDKGNGVGGANGAKGAGGQ) are enriched in gly residues. Residues 215–235 (NGNQANGPQNAGDVNGANGAD) show a composition bias toward low complexity. Gly residues predominate over residues 268-279 (GGGNQAQGGSKG). A compositionally biased stretch (low complexity) spans 280–294 (AGNASPASGANPGAN). Over residues 295–311 (QPGSADDQSSGQNNLQS) the composition is skewed to polar residues.

PopA2 and PopA3 are produced from PopA1.

Its subcellular location is the secreted. Acts as a specific hypersensitive response (HR) elicitor. Has activity on tobacco (non-host plant) and petunia but is without activity on tomato (host plant); PopA3 seems to be more active than a PopA1-PopA2 mixture. The protein is Protein PopA1 (popA) of Ralstonia nicotianae (strain ATCC BAA-1114 / GMI1000) (Ralstonia solanacearum).